A 334-amino-acid polypeptide reads, in one-letter code: Endoplasmic reticulum junction formation protein lunapark (334 aa).

Topologically, residues 1–40 are cytoplasmic; the sequence is MGWFFQKKKEFDFGGELDRLEMKLEEAQYNIDNIQSQKKK. Residues 12-42 are a coiled coil; that stretch reads DFGGELDRLEMKLEEAQYNIDNIQSQKKKIL. Residues 41 to 61 form a helical membrane-spanning segment; that stretch reads ILFRYTVCSLAIYTIGMAVWA. The Lumenal segment spans residues 62–78; that stretch reads SRSSILFQHPLFSKLFR. The chain crosses the membrane as a helical span at residues 79-99; sequence ISLYILGVFSLYMFRWAIAWF. A coiled-coil region spans residues 99–127; the sequence is FCEKRLSRARMNLHKLNAEKRKILDALKS. Over 100–334 the chain is Cytoplasmic; it reads CEKRLSRARM…SVPESLTPTK (235 aa). A C4-type; plays a role in ER morphology zinc finger spans residues 201-227; that stretch reads CSHCFHHNGLASYGEKASDVRYVCLFC. Residues 237–315 are disordered; the sequence is KSLPSSEMDS…SSPDASYNSV (79 aa). A compositionally biased stretch (polar residues) spans 239-252; that stretch reads LPSSEMDSNLQTNP. Positions 253–270 are enriched in low complexity; it reads SSISKGKKNNSNNTTQKG. The segment covering 273–283 has biased composition (polar residues); that stretch reads IISSPQVINAS. Serine 284 carries the post-translational modification Phosphoserine. Residues 297–315 show a composition bias toward low complexity; that stretch reads ALPTSPLSSSSPDASYNSV.

Belongs to the lunapark family.

Its subcellular location is the endoplasmic reticulum membrane. It localises to the golgi apparatus membrane. Its function is as follows. Plays a role in tubular endoplasmic reticulum network formation and maintenance. This chain is Endoplasmic reticulum junction formation protein lunapark (lnp1), found in Schizosaccharomyces pombe (strain 972 / ATCC 24843) (Fission yeast).